The chain runs to 209 residues: Ribosomal RNA large subunit methyltransferase E (209 aa).

Residues Gly63, Trp65, Asp83, Asp99, and Asp124 each coordinate S-adenosyl-L-methionine. Lys164 (proton acceptor) is an active-site residue.

It belongs to the class I-like SAM-binding methyltransferase superfamily. RNA methyltransferase RlmE family.

It localises to the cytoplasm. It catalyses the reaction uridine(2552) in 23S rRNA + S-adenosyl-L-methionine = 2'-O-methyluridine(2552) in 23S rRNA + S-adenosyl-L-homocysteine + H(+). Functionally, specifically methylates the uridine in position 2552 of 23S rRNA at the 2'-O position of the ribose in the fully assembled 50S ribosomal subunit. The polypeptide is Ribosomal RNA large subunit methyltransferase E (Proteus mirabilis (strain HI4320)).